Consider the following 319-residue polypeptide: 4-hydroxy-3-methylbut-2-enyl diphosphate reductase (319 aa).

Cys17 is a binding site for [4Fe-4S] cluster. (2E)-4-hydroxy-3-methylbut-2-enyl diphosphate-binding residues include His46 and His79. Dimethylallyl diphosphate is bound by residues His46 and His79. Isopentenyl diphosphate contacts are provided by His46 and His79. Cys101 serves as a coordination point for [4Fe-4S] cluster. Position 129 (His129) interacts with (2E)-4-hydroxy-3-methylbut-2-enyl diphosphate. Position 129 (His129) interacts with dimethylallyl diphosphate. His129 serves as a coordination point for isopentenyl diphosphate. Glu131 (proton donor) is an active-site residue. Thr170 contacts (2E)-4-hydroxy-3-methylbut-2-enyl diphosphate. Residue Cys200 participates in [4Fe-4S] cluster binding. The (2E)-4-hydroxy-3-methylbut-2-enyl diphosphate site is built by Ser228, Ser229, Asn230, and Ser273. The dimethylallyl diphosphate site is built by Ser228, Ser229, Asn230, and Ser273. Positions 228, 229, 230, and 273 each coordinate isopentenyl diphosphate.

This sequence belongs to the IspH family. The cofactor is [4Fe-4S] cluster.

The enzyme catalyses isopentenyl diphosphate + 2 oxidized [2Fe-2S]-[ferredoxin] + H2O = (2E)-4-hydroxy-3-methylbut-2-enyl diphosphate + 2 reduced [2Fe-2S]-[ferredoxin] + 2 H(+). The catalysed reaction is dimethylallyl diphosphate + 2 oxidized [2Fe-2S]-[ferredoxin] + H2O = (2E)-4-hydroxy-3-methylbut-2-enyl diphosphate + 2 reduced [2Fe-2S]-[ferredoxin] + 2 H(+). Its pathway is isoprenoid biosynthesis; dimethylallyl diphosphate biosynthesis; dimethylallyl diphosphate from (2E)-4-hydroxy-3-methylbutenyl diphosphate: step 1/1. The protein operates within isoprenoid biosynthesis; isopentenyl diphosphate biosynthesis via DXP pathway; isopentenyl diphosphate from 1-deoxy-D-xylulose 5-phosphate: step 6/6. Its function is as follows. Catalyzes the conversion of 1-hydroxy-2-methyl-2-(E)-butenyl 4-diphosphate (HMBPP) into a mixture of isopentenyl diphosphate (IPP) and dimethylallyl diphosphate (DMAPP). Acts in the terminal step of the DOXP/MEP pathway for isoprenoid precursor biosynthesis. This chain is 4-hydroxy-3-methylbut-2-enyl diphosphate reductase, found in Cereibacter sphaeroides (strain ATCC 17023 / DSM 158 / JCM 6121 / CCUG 31486 / LMG 2827 / NBRC 12203 / NCIMB 8253 / ATH 2.4.1.) (Rhodobacter sphaeroides).